We begin with the raw amino-acid sequence, 266 residues long: Glucosamine-6-phosphate deaminase (266 aa).

The active-site Proton acceptor; for enolization step is the Asp72. The active-site For ring-opening step is Asp141. The active-site Proton acceptor; for ring-opening step is His143. Catalysis depends on Glu148, which acts as the For ring-opening step.

It belongs to the glucosamine/galactosamine-6-phosphate isomerase family. NagB subfamily. As to quaternary structure, homohexamer.

It carries out the reaction alpha-D-glucosamine 6-phosphate + H2O = beta-D-fructose 6-phosphate + NH4(+). It functions in the pathway amino-sugar metabolism; N-acetylneuraminate degradation; D-fructose 6-phosphate from N-acetylneuraminate: step 5/5. Allosterically activated by N-acetylglucosamine 6-phosphate (GlcNAc6P). Its function is as follows. Catalyzes the reversible isomerization-deamination of glucosamine 6-phosphate (GlcN6P) to form fructose 6-phosphate (Fru6P) and ammonium ion. The protein is Glucosamine-6-phosphate deaminase of Yersinia pseudotuberculosis serotype O:1b (strain IP 31758).